Consider the following 97-residue polypeptide: SAGA-associated factor 11 (97 aa).

The segment at 70 to 91 (IECNVCGREVSGNRFAAHLVRC) adopts an SGF11-type zinc-finger fold.

The protein belongs to the SGF11 family. In terms of assembly, component of the 1.8 MDa SAGA transcription coactivator-HAT complex. SAGA is built of 5 distinct domains with specialized functions. Within the SAGA complex, SUS1, SGF11, SGF73 and UBP8 form an additional subcomplex of SAGA called the DUB module (deubiquitination module). Interacts directly with SGF73, SUS1 and UBP8.

Its subcellular location is the nucleus. Functions as a component of the transcription regulatory histone acetylation (HAT) complex SAGA. At the promoters, SAGA is required for recruitment of the basal transcription machinery. It influences RNA polymerase II transcriptional activity through different activities such as TBP interaction and promoter selectivity, interaction with transcription activators, and chromatin modification through histone acetylation and deubiquitination. SAGA acetylates nucleosomal histone H3 to some extent (to form H3K9ac, H3K14ac, H3K18ac and H3K23ac). SAGA interacts with DNA via upstream activating sequences (UASs). Involved in transcriptional regulation of a subset of SAGA-regulated genes. Within the SAGA complex, participates in a subcomplex, that specifically deubiquitinates histones H2B. The chain is SAGA-associated factor 11 from Kluyveromyces lactis (strain ATCC 8585 / CBS 2359 / DSM 70799 / NBRC 1267 / NRRL Y-1140 / WM37) (Yeast).